A 468-amino-acid polypeptide reads, in one-letter code: Lipase 1 (468 aa).

The first 16 residues, 1 to 16, serve as a signal peptide directing secretion; that stretch reads MRGIAVFLAFISLIFA. Asn79 carries an N-linked (GlcNAc...) asparagine glycan. The cysteines at positions 112 and 285 are disulfide-linked. The Charge relay system role is filled by Ser196. 2 N-linked (GlcNAc...) asparagine glycosylation sites follow: Asn231 and Asn319. Active-site charge relay system residues include Asp348 and His381. A disulfide bridge connects residues Cys364 and Cys409. N-linked (GlcNAc...) asparagine glycosylation is found at Asn417, Asn422, and Asn451.

This sequence belongs to the AB hydrolase superfamily. Lipase family. Class Lip subfamily.

Its subcellular location is the secreted. It carries out the reaction a triacylglycerol + H2O = a diacylglycerol + a fatty acid + H(+). In terms of biological role, secreted lipase that is able to hydrolyze both the neutral triacylglycerols and the monopalmitate ester Tween 40, allowing the use of hydrolyzed products as carbon sources. Has broad lipolytic activity, which may be important for colonization and subsequent infection, therefore contributing to the persistence and virulence in human tissue. The sequence is that of Lipase 1 from Candida albicans (strain SC5314 / ATCC MYA-2876) (Yeast).